The primary structure comprises 115 residues: Succinate dehydrogenase hydrophobic membrane anchor subunit (115 aa).

At 1 to 15 (MVSNASALGRNGVHD) the chain is on the cytoplasmic side. The chain crosses the membrane as a helical span at residues 16-36 (FILVRATAIVLTLYIIYMVGF). The Periplasmic portion of the chain corresponds to 37 to 58 (FATSGELTYEVWIGFFASAFTK). Residues 59-80 (VFTLLALFSILIHAWIGMWQVL) traverse the membrane as a helical segment. His71 lines the heme pocket. The Cytoplasmic portion of the chain corresponds to 81-90 (TDYVKPLALR). Tyr83 serves as a coordination point for a ubiquinone. The helical transmembrane segment at 91-115 (LMLQLVIVVALVVYVIYGFVVVWGV) threads the bilayer.

As to quaternary structure, part of an enzyme complex containing four subunits: a flavoprotein, an iron-sulfur protein, plus two membrane-anchoring proteins, SdhC and SdhD. The complex can form homotrimers. Heme serves as cofactor.

It is found in the cell inner membrane. Its pathway is carbohydrate metabolism; tricarboxylic acid cycle. Its function is as follows. Membrane-anchoring subunit of succinate dehydrogenase (SDH). The protein is Succinate dehydrogenase hydrophobic membrane anchor subunit (sdhD) of Escherichia coli O6:H1 (strain CFT073 / ATCC 700928 / UPEC).